The chain runs to 388 residues: Spermidine/putrescine import ATP-binding protein PotA (388 aa).

In terms of domain architecture, ABC transporter spans 17–247 (IEIDHVTKRF…PATVFVANFI (231 aa)). 49–56 (GPSGCGKT) is an ATP binding site.

The protein belongs to the ABC transporter superfamily. Spermidine/putrescine importer (TC 3.A.1.11.1) family. In terms of assembly, the complex is composed of two ATP-binding proteins (PotA), two transmembrane proteins (PotB and PotC) and a solute-binding protein (PotD).

It localises to the cell membrane. It catalyses the reaction ATP + H2O + polyamine-[polyamine-binding protein]Side 1 = ADP + phosphate + polyamineSide 2 + [polyamine-binding protein]Side 1.. Part of the ABC transporter complex PotABCD involved in spermidine/putrescine import. Responsible for energy coupling to the transport system. In Mycobacterium sp. (strain KMS), this protein is Spermidine/putrescine import ATP-binding protein PotA.